Consider the following 144-residue polypeptide: MNGTTQNNAALFDGGVFSPYLTSRLPYWAGVRQNVVGSTVDGRPVAPANSSTLTYATIGPSPLDTAAAAAASAAASTARSMAADFSFYNHLASNAVTRTAVREDILTVMLAKLETLTAQLEELSQKVEELADATTHTPAQPVTQ.

Residues 106–133 (LTVMLAKLETLTAQLEELSQKVEELADA) adopt a coiled-coil conformation.

Belongs to the adenoviridae hexon-interlacing protein family. As to quaternary structure, homotrimer. Interacts with hexon protein; this interaction tethers the hexons together. Self-interacts with adjacent proteins. Interacts with kinesin light chain KLC1; this interaction leads to capsid disruption at the nuclear pore complex during virus entry into host cell.

It is found in the virion. Its subcellular location is the host nucleus. Functionally, structural component of the virion that acts as a cement protein on the capsid exterior and forms triskelion structures consisting of three molecules that stabilize three hexon trimers at the center of each icosahedral facet and fixes the peripentonal hexons. Dispensable for assembly. During virus entry, recruits the anterograde motor kinesin-1 to the capsid docked at the nuclear pore complex thereby subjecting the docked capsid to a pulling force. The resulting tension leads to capsid disruption, dispersion of capsid fragments toward cell periphery and eventually viral DNA entry into the host nucleus. The sequence is that of Hexon-interlacing protein from Homo sapiens (Human).